Consider the following 451-residue polypeptide: Tubulin alpha chain (451 aa).

The MREC motif motif lies at M1–C4. Residue Q11 participates in GTP binding. Position 40 is an N6-acetyllysine (K40). GTP contacts are provided by E71, S140, G144, T145, T179, N206, and N228. E71 is a binding site for Mg(2+). E254 is an active-site residue. Residues Y432–Y451 form a disordered region. A 5-glutamyl polyglutamate modification is found at E445.

It belongs to the tubulin family. As to quaternary structure, dimer of alpha and beta chains. A typical microtubule is a hollow water-filled tube with an outer diameter of 25 nm and an inner diameter of 15 nM. Alpha-beta heterodimers associate head-to-tail to form protofilaments running lengthwise along the microtubule wall with the beta-tubulin subunit facing the microtubule plus end conferring a structural polarity. Microtubules usually have 13 protofilaments but different protofilament numbers can be found in some organisms and specialized cells. The cofactor is Mg(2+). Post-translationally, some glutamate residues at the C-terminus are polyglycylated, resulting in polyglycine chains on the gamma-carboxyl group. Glycylation is mainly limited to tubulin incorporated into axonemes (cilia and flagella) whereas glutamylation is prevalent in neuronal cells, centrioles, axonemes, and the mitotic spindle. Both modifications can coexist on the same protein on adjacent residues, and lowering polyglycylation levels increases polyglutamylation, and reciprocally. The precise function of polyglycylation is still unclear. Some glutamate residues at the C-terminus are polyglutamylated, resulting in polyglutamate chains on the gamma-carboxyl group. Polyglutamylation plays a key role in microtubule severing by spastin (SPAST). SPAST preferentially recognizes and acts on microtubules decorated with short polyglutamate tails: severing activity by SPAST increases as the number of glutamates per tubulin rises from one to eight, but decreases beyond this glutamylation threshold. In terms of processing, acetylation of alpha chains at Lys-40 is located inside the microtubule lumen. This modification has been correlated with increased microtubule stability, intracellular transport and ciliary assembly. Post-translationally, undergoes a tyrosination/detyrosination cycle, the cyclic removal and re-addition of a C-terminal tyrosine residue by the enzymes tubulin tyrosine carboxypeptidase (MATCAP, VASH1 or VASH2) and tubulin tyrosine ligase (TTL), respectively. Tyrosination promotes microtubule interaction with CAP-Gly microtubule plus-end tracking proteins. Tyrosinated tubulins regulate the initiation of dynein-driven motility. In terms of processing, detyrosination is involved in metaphase plate congression by guiding chromosomes during mitosis. Detyrosination increases microtubules-dependent mechanotransduction in dystrophic cardiac and skeletal muscle. In cardiomyocytes, detyrosinated microtubules are required to resist to contractile compression during contraction.

It localises to the cytoplasm. Its subcellular location is the cytoskeleton. The catalysed reaction is GTP + H2O = GDP + phosphate + H(+). Functionally, tubulin is the major constituent of microtubules, a cylinder consisting of laterally associated linear protofilaments composed of alpha- and beta-tubulin heterodimers. Microtubules grow by the addition of GTP-tubulin dimers to the microtubule end, where a stabilizing cap forms. Below the cap, tubulin dimers are in GDP-bound state, owing to GTPase activity of alpha-tubulin. This chain is Tubulin alpha chain, found in Torpedo marmorata (Marbled electric ray).